Reading from the N-terminus, the 296-residue chain is Glycine N-acyltransferase-like protein (296 aa).

An N6-acetyllysine; alternate modification is found at Lys41. Lys41 carries the post-translational modification N6-succinyllysine; alternate. The residue at position 43 (Lys43) is an N6-acetyllysine. At Lys48 the chain carries N6-acetyllysine; alternate. The residue at position 48 (Lys48) is an N6-succinyllysine; alternate. 2 positions are modified to N6-acetyllysine: Lys80 and Lys83. An N6-acetyllysine; alternate mark is found at Lys183 and Lys256. Lys183 and Lys256 each carry N6-succinyllysine; alternate.

It belongs to the glycine N-acyltransferase family.

Its subcellular location is the mitochondrion. It catalyses the reaction an acyl-CoA + glycine = an N-acylglycine + CoA + H(+). Functionally, mitochondrial acyltransferase which transfers the acyl group to the N-terminus of glycine. Can conjugate a multitude of substrates to form a variety of N-acylglycines. The protein is Glycine N-acyltransferase-like protein (Gm4952) of Mus musculus (Mouse).